We begin with the raw amino-acid sequence, 302 residues long: tRNA pseudouridine synthase B (302 aa).

The active-site Nucleophile is the Asp-43.

The protein belongs to the pseudouridine synthase TruB family. Type 1 subfamily.

The catalysed reaction is uridine(55) in tRNA = pseudouridine(55) in tRNA. In terms of biological role, responsible for synthesis of pseudouridine from uracil-55 in the psi GC loop of transfer RNAs. The chain is tRNA pseudouridine synthase B from Burkholderia mallei (strain NCTC 10247).